Reading from the N-terminus, the 243-residue chain is Myrosinase MB2 (243 aa).

The N-linked (GlcNAc...) asparagine glycan is linked to Asn30. Tyr51 serves as a coordination point for substrate. The Nucleophile role is filled by Glu125. Substrate contacts are provided by residues Trp173 and 180–181 (EF). The N-linked (GlcNAc...) asparagine glycan is linked to Asn216.

Belongs to the glycosyl hydrolase 1 family. Homodimer. As to expression, in vacuoles called myrosin grains of a certain class of cells, myrosin cells, distributed in the cotyledons and the axis of the embryo as well as in different organs of the growing plant.

The protein localises to the vacuole. It carries out the reaction a thioglucoside + H2O = a sugar + a thiol.. In terms of biological role, degradation of glucosinolates (glucose residue linked by a thioglucoside bound to an amino acid derivative) to glucose, sulfate and any of the products: thiocyanates, isothiocyanates, nitriles, epithionitriles or oxazolidine-2-thiones. This is Myrosinase MB2 from Sinapis alba (White mustard).